The following is a 214-amino-acid chain: Reticulon-3-A (214 aa).

Residues 1–21 (MAETSGPQSSHISSSSVGEKG) form a disordered region. A Reticulon domain is found at 26 to 214 (VRDLLYWRDV…LPGALKKKSE (189 aa)). The next 2 membrane-spanning stretches (helical) occupy residues 46–66 (MVLL…YLVL) and 155–175 (VFNG…APIV).

As to quaternary structure, homodimer. As to expression, expressed in the animal hemisphere at the four-cell stage. During gastrulation, expression becomes restricted to the prospective neuroectoderm. At the early tail bud stage, expressed in the head structure. At the tadpole stage, expressed in head and neural tissues including the otic vesicle and optic nerve.

Its subcellular location is the endoplasmic reticulum membrane. The protein localises to the golgi apparatus membrane. Its function is as follows. May be involved in membrane trafficking in the early secretory pathway. The polypeptide is Reticulon-3-A (rtn3-a) (Xenopus laevis (African clawed frog)).